A 99-amino-acid polypeptide reads, in one-letter code: A-type ATP synthase subunit F (99 aa).

It belongs to the V-ATPase F subunit family. Has multiple subunits with at least A(3), B(3), C, D, E, F, H, I and proteolipid K(x).

It is found in the cell membrane. Component of the A-type ATP synthase that produces ATP from ADP in the presence of a proton gradient across the membrane. The chain is A-type ATP synthase subunit F from Methanococcus maripaludis (strain DSM 14266 / JCM 13030 / NBRC 101832 / S2 / LL).